An 85-amino-acid chain; its full sequence is Large ribosomal subunit protein bL31B (85 aa).

The protein belongs to the bacterial ribosomal protein bL31 family. Type B subfamily. Part of the 50S ribosomal subunit.

This chain is Large ribosomal subunit protein bL31B, found in Pseudomonas entomophila (strain L48).